The sequence spans 90 residues: Large ribosomal subunit protein bL27 (90 aa).

Residues 1–22 (MAHKKAGGSSRNGRDSESKRLG) form a disordered region.

This sequence belongs to the bacterial ribosomal protein bL27 family.

The polypeptide is Large ribosomal subunit protein bL27 (Allorhizobium ampelinum (strain ATCC BAA-846 / DSM 112012 / S4) (Agrobacterium vitis (strain S4))).